A 33-amino-acid polypeptide reads, in one-letter code: Kappa-theraphotoxin-Pg2a (33 aa).

Disulfide bonds link Cys2–Cys16, Cys9–Cys21, and Cys15–Cys28.

In terms of tissue distribution, expressed by the venom gland.

It localises to the secreted. Functionally, gating modifier of Kv2.1/KCNB1 channels. This chain is Kappa-theraphotoxin-Pg2a, found in Chilobrachys guangxiensis (Chinese earth tiger tarantula).